A 409-amino-acid chain; its full sequence is BRCA1-A complex subunit Abraxas 1 (409 aa).

One can recognise an MPN domain in the interval 7–160 (SAVLSGFVLG…HSLYKPQKGL (154 aa)). Ser48 is modified (phosphoserine). The stretch at 206–260 (DGSLKEVHKINEMYASLQEELKSICKKVEDSEQAVDKLVKDVNRLKREIEKRRGA) forms a coiled coil. Over residues 362–372 (LLDTQDKRSKA) the composition is skewed to basic and acidic residues. Residues 362–409 (LLDTQDKRSKADTGSSNQDKASKMSSPETDEEIEKMKGFGEYSRSPTF) are disordered. Residues 373–388 (DTGSSNQDKASKMSSP) are compositionally biased toward polar residues. 2 positions are modified to phosphoserine: Ser386 and Ser387. Thr390 is modified (phosphothreonine). Phosphoserine is present on residues Ser404 and Ser406. The short motif at 406 to 409 (SPTF) is the pSXXF motif element.

It belongs to the FAM175 family. Abraxas subfamily. Component of the ARISC complex, at least composed of UIMC1/RAP80, ABRAXAS1, BRCC3/BRCC36, BABAM2 and BABAM1/NBA1. Component of the BRCA1-A complex, at least composed of BRCA1, BARD1, UIMC1/RAP80, ABRAXAS1, BRCC3/BRCC36, BABAM2 and BABAM1/NBA1. In the complex, interacts directly with UIMC1/RAP80, BRCC3/BRCC36 and BABAM2. Interacts directly (when phosphorylated at Ser-406) with BRCA1. Homodimer. The homodimer interacts directly (when phosphorylated at Ser-404 and Ser-406) with two BRCA1 chains, giving rise to a heterotetramer. Binds polyubiquitin. In terms of processing, phosphorylation of Ser-406 of the pSXXF motif by ATM or ATR constitutes a specific recognition motif for the BRCT domain of BRCA1. Ionizing radiation promotes rapid phosphorylation at Ser-404 and Ser-406 by ATM; this promotes recruitment of BRCA1 to sites of DNA damage.

It localises to the nucleus. Functionally, involved in DNA damage response and double-strand break (DSB) repair. Component of the BRCA1-A complex, acting as a central scaffold protein that assembles the various components of the complex and mediates the recruitment of BRCA1. The BRCA1-A complex specifically recognizes 'Lys-63'-linked ubiquitinated histones H2A and H2AX at DNA lesion sites, leading to target the BRCA1-BARD1 heterodimer to sites of DNA damage at DSBs. This complex also possesses deubiquitinase activity that specifically removes 'Lys-63'-linked ubiquitin on histones H2A and H2AX. In Homo sapiens (Human), this protein is BRCA1-A complex subunit Abraxas 1.